The following is a 583-amino-acid chain: MSSPDRSIDIDLEKYPSTATKSVYGQSKDDKNVFDIHPTESEVIPGEVEYADTPSHQNFLQKFFSDFKPVKADREDGVALKRHLKGRHMQMIAIGGAIGTGLFVGSGSSLADGGPASVIIDYTLIGIMMFFTVYALGELAVSYPVAGGFYNYAVRFIDPAWGFAVGWNYFMNYFVTFPLELTTCAITFRYWTDINSCAWITIFLVFVICINLFGVRGYGEVEFILSTLKVVATTGFIILAIIINCGGVPTDPRGYIGGKIIKNKPFRHSFKGFCSVFTTAGFSFSGTEVVGLAAAEAEDPQKSLPRATKQVFWRIAIFYVVSLILIGLLVSPDDPRLMGNSSDGSTSPFVLAIKEANIRGLPSVFNAVIIISTVSVANSCTFTASRTLHAMAAKGDAPRFFAYTDRLGRPLLAMAVCLLFGFFAYINAAGDVSDTVFDWLLAISGISNFFSWGSINLCHIVFRLAMKKQGRSLDQLGFVSPMGIWGSAIGLAFNILCLMAEFYVSLFPIGSKPNANDFFQGYLAAPIVIAFFIGYKIYDRSHIPSLSKLDLDTGLRTYPPKDKESEKIRDAKGFFKWIWQSLC.

Serine 22 bears the Phosphoserine mark. 6 consecutive transmembrane segments (helical) span residues 91–111 (MIAIGGAIGTGLFVGSGSSLA), 116–136 (ASVIIDYTLIGIMMFFTVYAL), 159–179 (PAWGFAVGWNYFMNYFVTFPL), 194–214 (INSCAWITIFLVFVICINLFG), 223–243 (FILSTLKVVATTGFIILAIII), and 311–331 (VFWRIAIFYVVSLILIGLLVS). Asparagine 340 carries N-linked (GlcNAc...) asparagine glycosylation. Transmembrane regions (helical) follow at residues 364 to 384 (VFNAVIIISTVSVANSCTFTA), 410 to 430 (PLLAMAVCLLFGFFAYINAAG), 435 to 455 (TVFDWLLAISGISNFFSWGSI), 476 to 496 (LGFVSPMGIWGSAIGLAFNIL), and 518 to 538 (FFQGYLAAPIVIAFFIGYKIY).

This sequence belongs to the amino acid-polyamine-organocation (APC) superfamily.

The protein resides in the golgi apparatus membrane. Its subcellular location is the membrane. This is an uncharacterized protein from Schizosaccharomyces pombe (strain 972 / ATCC 24843) (Fission yeast).